The sequence spans 326 residues: Nucleoporin Nup37 (326 aa).

4 WD repeats span residues 70-117 (HHGV…KNEY), 122-162 (GHSD…TAHF), 164-203 (LHSP…AILS), and 294-325 (GSVA…WVTE).

In terms of assembly, component of the Nup107-160 subcomplex of the nuclear pore complex (NPC). The Nup107-160 subcomplex includes NUP160, NUP133, NUP107, NUP98, NUP85, NUP43, NUP37, SEH1 and SEC13.

The protein localises to the chromosome. It is found in the centromere. Its subcellular location is the kinetochore. It localises to the nucleus. The protein resides in the nuclear pore complex. Its function is as follows. Component of the Nup107-160 subcomplex of the nuclear pore complex (NPC). The Nup107-160 subcomplex is required for the assembly of a functional NPC. The Nup107-160 subcomplex is also required for normal kinetochore microtubule attachment, mitotic progression and chromosome segregation. This chain is Nucleoporin Nup37 (Nup37), found in Mus musculus (Mouse).